Here is a 440-residue protein sequence, read N- to C-terminus: Adenylosuccinate synthetase (440 aa).

GTP contacts are provided by residues 11–17 (GDEGKGG) and 39–41 (GHT). Residue Asp-12 is the Proton acceptor of the active site. Residues Asp-12 and Gly-39 each contribute to the Mg(2+) site. Residues 12–15 (DEGK), 37–40 (NAGH), Thr-127, Arg-141, Gln-230, Thr-245, and Arg-311 contribute to the IMP site. His-40 (proton donor) is an active-site residue. Residue 307-313 (TVTGRPR) participates in substrate binding. Residues Arg-313, 339 to 341 (HLD), and 424 to 426 (GVG) contribute to the GTP site.

Belongs to the adenylosuccinate synthetase family. As to quaternary structure, homodimer. The cofactor is Mg(2+).

It is found in the cytoplasm. It carries out the reaction IMP + L-aspartate + GTP = N(6)-(1,2-dicarboxyethyl)-AMP + GDP + phosphate + 2 H(+). The protein operates within purine metabolism; AMP biosynthesis via de novo pathway; AMP from IMP: step 1/2. Its function is as follows. Plays an important role in the de novo pathway of purine nucleotide biosynthesis. Catalyzes the first committed step in the biosynthesis of AMP from IMP. The protein is Adenylosuccinate synthetase of Halobacterium salinarum (strain ATCC 29341 / DSM 671 / R1).